Consider the following 268-residue polypeptide: Early nodulin-20 (268 aa).

The signal sequence occupies residues 1–24 (MSSSSPILLMFIFSIWMLISYSES). The Phytocyanin domain occupies 25-129 (TDYLVGDSEN…GLKLAVVVMV (105 aa)). Asn67 carries an N-linked (GlcNAc...) asparagine glycan. An intrachain disulfide couples Cys83 to Cys117. 2 stretches are compositionally biased toward pro residues: residues 134 to 145 (SSPPPPPSPPTP) and 160 to 185 (PSPPSPSPSPSPSPSPSPSPRSTPIP). A disordered region spans residues 134-253 (SSPPPPPSPP…SGSKGGGAGH (120 aa)). The segment covering 199-235 (PSLSKSPSPSESPSLAPSPSDSVASLAPSSSPSDESP) has biased composition (low complexity). Ser243 carries the GPI-anchor amidated serine lipid modification. Residues 244–268 (SGSKGGGAGHGFLEVSIAMMMFLIF) constitute a propeptide, removed in mature form.

Belongs to the early nodulin-like (ENODL) family.

It is found in the cell membrane. Its function is as follows. May act as a carbohydrate transporter. In Medicago truncatula (Barrel medic), this protein is Early nodulin-20.